Consider the following 109-residue polypeptide: Major allergen I polypeptide chain 2 (109 aa).

A signal peptide spans 1 to 17; sequence MRGALLVLALLVTQALG. Asparagine 50 carries an N-linked (GlcNAc...) asparagine glycan.

It belongs to the secretoglobin family. Heterotetramer composed of two non-covalently linked disulfide-linked heterodimer of chains 1 and 2. As to expression, the long form is preferentially expressed in the salivary gland, while the short form is preferentially expressed in the skin.

It is found in the secreted. The protein is Major allergen I polypeptide chain 2 (CH2) of Felis catus (Cat).